A 1351-amino-acid chain; its full sequence is uncharacterized protein (1351 aa).

Residues 1 to 17 show a composition bias toward basic and acidic residues; sequence MSKKDSKNSPKKSKDTN. The interval 1 to 31 is disordered; the sequence is MSKKDSKNSPKKSKDTNSDESSSSNAETSSD. Low complexity predominate over residues 19-31; sequence DESSSSNAETSSD.

This is an uncharacterized protein from Acanthamoeba polyphaga mimivirus (APMV).